The chain runs to 1059 residues: Zinc finger protein 658 (1059 aa).

The KRAB domain occupies Val-8–Pro-79. Lys-178 is covalently cross-linked (Glycyl lysine isopeptide (Lys-Gly) (interchain with G-Cter in SUMO2)). A C2H2-type 1; degenerate zinc finger spans residues Phe-325 to Gln-347. Residues Phe-352–His-375 form a C2H2-type 2; degenerate zinc finger. The C2H2-type 3; degenerate zinc-finger motif lies at Tyr-381 to His-406. The segment at Tyr-412–Tyr-434 adopts a C2H2-type 4; degenerate zinc-finger fold. 14 consecutive C2H2-type zinc fingers follow at residues Tyr-440–His-462, Tyr-518–His-540, Tyr-546–His-568, Tyr-574–His-596, Tyr-602–His-624, Tyr-630–His-652, Tyr-658–His-680, Tyr-686–His-708, Tyr-714–His-736, Tyr-742–His-764, Tyr-770–His-792, Tyr-798–His-820, Tyr-826–His-848, and Tyr-854–His-876. The C2H2-type 19; degenerate zinc finger occupies Tyr-882 to Arg-904. C2H2-type zinc fingers lie at residues Tyr-910–His-932, Tyr-938–His-960, Tyr-966–His-988, Tyr-994–His-1016, and Tyr-1022–His-1045.

This sequence belongs to the krueppel C2H2-type zinc-finger protein family.

The protein localises to the nucleus. Its function is as follows. Mediates transcriptional repression in response to zinc. Represses several genes, including SLC30A5, SLC30A10 and CBWD1, by binding to the zinc transcriptional regulatory element (ZTRE) (5'-C[AC]C[TAG]CC[TC]-N(0-50)-[GA]G[ATC]G[TG]G-3') found in the promoter region. May play a role in the control of ribosome biogenesis, regulating predominantly rRNA levels, as well as those of several ribosomal proteins, thus coordinating this highly zinc-demanding process with the available zinc supply. This chain is Zinc finger protein 658 (ZNF658), found in Homo sapiens (Human).